A 329-amino-acid chain; its full sequence is Putative glucose-6-phosphate 1-epimerase (329 aa).

Residues 1–13 (MAAPAPAGAAASP) show a composition bias toward low complexity. Residues 1-20 (MAAPAPAGAAASPSPKPQLP) are disordered. Substrate contacts are provided by R82, Q100, and R105. H183 is an active-site residue. D228 contributes to the substrate binding site. E287 is an active-site residue.

Belongs to the glucose-6-phosphate 1-epimerase family.

The enzyme catalyses alpha-D-glucose 6-phosphate = beta-D-glucose 6-phosphate. The polypeptide is Putative glucose-6-phosphate 1-epimerase (Cenchrus ciliaris (Buffelgrass)).